The primary structure comprises 395 residues: Innexin inx3 (395 aa).

Residues 1 to 37 (MAVFGMVSAVSGFIKIRYLLDKAVIDNMVFRCHYRIT) are Cytoplasmic-facing. The helical transmembrane segment at 38–58 (TAILFTCCIIVTANNLIGDPI) threads the bilayer. Residues 59–114 (SCINDGAIPMHVINTFCWITYTYTIPGQQHRQIGTDVAGPGLGNEYGQEKRYHSYY) lie on the Extracellular side of the membrane. The chain crosses the membrane as a helical span at residues 115-135 (QWVPFVLFFQGLMFYVPHWVW). Topologically, residues 136 to 183 (KNMEDGKIRMITDGLRGMVSVPDDYRRDRQDRILKYFVNSLNTHNGYS) are cytoplasmic. A helical membrane pass occupies residues 184 to 204 (FAYFFCELLNFINVIVNIFMV). Residues 205-272 (DKFLGGAFMS…VLALNILNEK (68 aa)) lie on the Extracellular side of the membrane. Residues 273 to 293 (IYIFLWFWFIILATISGVAVL) form a helical membrane-spanning segment. Residues 294–395 (YSLVVIMMPT…TFGGGKETET (102 aa)) are Cytoplasmic-facing. Phosphoserine occurs at positions 366 and 377. The residue at position 381 (Tyr381) is a Phosphotyrosine.

This sequence belongs to the pannexin family. Heterooligomer of Inx2 (via cytoplasmic C-terminal region) and Inx3 (via cytoplasmic C-terminal region). As to expression, in ovary, expressed in nurse cells and follicle cells. Expressed in embryonic epithelial cells. Ubiquitously expressed in stage 5 embryos. Expressed in foregut and hindgut from stage 11-17 and in proventriculus, epidermis and CNS in stage 16 embryos (at protein level). Expressed in anterior and ventral regions in stage 8 embryos. Repeating epidermal pattern emerges at stage 11, refines to one or two cells at each side of the segment borders by stage 13. Expressed in the imaginal wing disk. In pupae, expressed in the CNS and in secondary and tertiary pigment cells of the retina.

The protein localises to the cell membrane. Its subcellular location is the cell junction. It localises to the gap junction. The protein resides in the cytoplasm. It is found in the lateral cell membrane. The protein localises to the apicolateral cell membrane. Its function is as follows. Structural components of the gap junctions. Essential for proper epithelial development of the epidermis. The protein is Innexin inx3 (Inx3) of Drosophila melanogaster (Fruit fly).